A 231-amino-acid polypeptide reads, in one-letter code: Flagellar L-ring protein (231 aa).

The first 18 residues, 1-18 (MKRFVSVVALSGVVSLAG), serve as a signal peptide directing secretion. A lipid anchor (N-palmitoyl cysteine) is attached at C19. A lipid anchor (S-diacylglycerol cysteine) is attached at C19.

This sequence belongs to the FlgH family. The basal body constitutes a major portion of the flagellar organelle and consists of four rings (L,P,S, and M) mounted on a central rod.

The protein localises to the cell outer membrane. The protein resides in the bacterial flagellum basal body. In terms of biological role, assembles around the rod to form the L-ring and probably protects the motor/basal body from shearing forces during rotation. The polypeptide is Flagellar L-ring protein (Pseudomonas fluorescens (strain Pf0-1)).